Here is a 30-residue protein sequence, read N- to C-terminus: Trypsin inhibitor 6 (30 aa).

3 disulfides stabilise this stretch: cysteine 4–cysteine 21, cysteine 11–cysteine 23, and cysteine 17–cysteine 29.

Belongs to the protease inhibitor I7 (squash-type serine protease inhibitor) family.

The protein resides in the secreted. Its function is as follows. Strongly inhibits trypsin, weakly inhibits chymotrypsin. This chain is Trypsin inhibitor 6, found in Cyclanthera pedata (Achocha).